A 326-amino-acid chain; its full sequence is TATA-box-binding protein (326 aa).

2 disordered regions span residues 1-21 (MDQN…QGAM) and 114-146 (LTTA…SESS). A compositionally biased stretch (low complexity) spans 114–125 (LTTAPLPGTTPL). Tandem repeats lie at residues 152–228 (LQNI…ARVV) and 242–319 (IQNM…YPIL). 5 residues coordinate DNA: asparagine 154, arginine 190, lysine 205, asparagine 244, and arginine 281.

Belongs to the TBP family. Binds DNA as monomer. Belongs to the TFIID complex together with the TBP-associated factors (TAFs). Part of a TFIID-containing RNA polymerase II pre-initiation complex that is composed of TBP and at least GTF2A1, GTF2A2, GTF2E1, GTF2E2, GTF2F1, GTF2H2, GTF2H3, GTF2H4, GTF2H5, GTF2B, TCEA1, ERCC2, ERCC3, TAF1, TAF2, TAF3, TAF4, TAF5, TAF6, TAF7, TAF8, TAF9, TAF10, TAF11, TAF12 and TAF13. Component of the transcription factor SL1/TIF-IB complex, composed of TBP and at least TAF1A, TAF1B, TAF1C and TAF1D. Association of TBP to form either TFIID or SL1/TIF-IB appears to be mutually exclusive. Interacts with TAF1A, TAF1B and TAF1C. Interacts with TFIIB, NCOA6, DRAP1, DR1 and ELF3. Interacts with SPIB, SNAPC1, SNAPC2 and SNAPC4. Interacts with UTF1. Interacts with BRF2; this interaction promotes recruitment of BRF2 to TATA box-containing promoters. Interacts with UBTF. Interacts with GPBP1. Interacts with CITED2. Interacts with ATF7IP. Interacts with LLPH. Interacts with HSF1 (via transactivation domain). Interacts with GTF2B (via C-terminus); this interaction with promoter-bound TBP guides RNA polymerase II into the pre-initiation complex (PIC). Interacts with PAX5. Interacts with MSX1; the interaction may inhibit MSX1 autoinactivation.

The protein localises to the nucleus. General transcription factor that functions at the core of the DNA-binding multiprotein factor TFIID. Binding of TFIID to the TATA box is the initial transcriptional step of the pre-initiation complex (PIC), playing a role in the activation of eukaryotic genes transcribed by RNA polymerase II. Component of a BRF2-containing transcription factor complex that regulates transcription mediated by RNA polymerase III. Component of the transcription factor SL1/TIF-IB complex, which is involved in the assembly of the PIC (pre-initiation complex) during RNA polymerase I-dependent transcription. The rate of PIC formation probably is primarily dependent on the rate of association of SL1 with the rDNA promoter. SL1 is involved in stabilization of nucleolar transcription factor 1/UBTF on rDNA. The polypeptide is TATA-box-binding protein (TBP) (Macaca fascicularis (Crab-eating macaque)).